A 694-amino-acid chain; its full sequence is ATP-dependent RNA helicase DHX33 (694 aa).

Positions L78–G246 constitute a Helicase ATP-binding domain. Residue S91–T98 coordinates ATP. Positions D188–H191 match the DEAH box motif. The Helicase C-terminal domain occupies T270–D443.

Belongs to the DEAD box helicase family. DEAH subfamily.

It localises to the nucleus. The protein localises to the nucleolus. The catalysed reaction is ATP + H2O = ADP + phosphate + H(+). In terms of biological role, part of a translational control module, also containing pths/DDX47 and ais/DDX52, which coordinates germline stem cell differentiation with ribosome biogenesis during oogenesis. This module allows for coregulation of ribosomal proteins and non1/GTPBP4, a p53 repressor, preventing p53 stabilization, cell cycle arrest and loss of stem cell differentiation. The polypeptide is ATP-dependent RNA helicase DHX33 (Drosophila melanogaster (Fruit fly)).